Here is a 133-residue protein sequence, read N- to C-terminus: Ycf54-like protein (133 aa).

The protein belongs to the ycf54 family.

The polypeptide is Ycf54-like protein (Synechocystis sp. (strain ATCC 27184 / PCC 6803 / Kazusa)).